A 380-amino-acid chain; its full sequence is Rab9 effector protein with kelch motifs (380 aa).

Kelch repeat units follow at residues 57 to 103 (KIFI…FLPS), 108 to 154 (SIWV…TSSA), 159 to 211 (QLYV…AAGT), 212 to 258 (KLFI…AAVA), 262 to 311 (HVYM…VIPW), and 357 to 380 (LCFVFGGMNTEGEVYDDCLVTVVD).

As to quaternary structure, interacts with PIKFYVE; the interaction recruits RABEPK to the endosomal membrane. Interacts with RAB9 in its GTP-bound conformation. In terms of processing, phosphorylated on Ser residues by PIKFYVE.

The protein resides in the cytoplasm. The protein localises to the endosome membrane. Its function is as follows. Rab9 effector required for endosome to trans-Golgi network (TGN) transport. The sequence is that of Rab9 effector protein with kelch motifs from Mus musculus (Mouse).